Here is a 463-residue protein sequence, read N- to C-terminus: Sporulation-specific protein 22 (463 aa).

An N-terminal signal peptide occupies residues 1 to 25 (MNRITRKSCLFAIIFASLFVTHALG). 5 LRR repeats span residues 127-147 (SPEL…LFQL), 185-206 (IEII…NFNK), 207-233 (VQEI…TIRG), 251-275 (LREV…KVKS), and 302-325 (INNV…LMIA). 3 N-linked (GlcNAc...) asparagine glycosylation sites follow: Asn256, Asn314, and Asn327. Asn440 is lipidated: GPI-anchor amidated asparagine. Positions 441 to 463 (SANPSMQLDPLLFGTCLVAMLLF) are cleaved as a propeptide — removed in mature form.

This sequence belongs to the SPS2 family.

The protein localises to the cell membrane. Functionally, redundant with SPS2 for the organization of the beta-glucan layer of the spore wall. The protein is Sporulation-specific protein 22 (SPS22) of Saccharomyces cerevisiae (strain ATCC 204508 / S288c) (Baker's yeast).